Here is a 490-residue protein sequence, read N- to C-terminus: Doublesex- and mab-3-related transcription factor A1 (490 aa).

The span at 1-13 shows a compositional bias: basic and acidic residues; the sequence is MERLPHGRRDRSG. The segment at 1–31 is disordered; the sequence is MERLPHGRRDRSGGCRPHLAPGRAAAPASAA. The span at 20 to 31 shows a compositional bias: low complexity; the sequence is APGRAAAPASAA. The DM DNA-binding region spans 86 to 133; sequence CARCRNHGVVSALKGHKRFCRWRDCACAKCTLIAERQRVMAAQVALRR. Disordered regions lie at residues 152–171 and 207–289; these read GSSG…ESPQ and DRKQ…DLES. Residues 207-216 are compositionally biased toward basic and acidic residues; sequence DRKQEPKQRN. Polar residues-rich tracts occupy residues 217–242 and 269–289; these read CESC…SKGN and PTDQ…DLES. In terms of domain architecture, DMA spans 314 to 349; the sequence is RDPLGILTRIFPGYKHSRLEGILQFCKGDVVQAIEQ.

Belongs to the DMRT family. In terms of tissue distribution, widely expressed, with highest levels in ovary, testis, epididymis, preputial gland, vomeronasal organ, liver, salivary glands and heart. Also expressed throughout the brain with highest levels in the olfactory bulbs and medulla. Detected at similar levels in gonads of both sexes.

The protein resides in the nucleus. The chain is Doublesex- and mab-3-related transcription factor A1 (Dmrta1) from Mus musculus (Mouse).